A 1252-amino-acid polypeptide reads, in one-letter code: DNA-directed RNA polymerase subunit beta (1252 aa).

This sequence belongs to the RNA polymerase beta chain family. As to quaternary structure, the RNAP catalytic core consists of 2 alpha, 1 beta, 1 beta' and 1 omega subunit. When a sigma factor is associated with the core the holoenzyme is formed, which can initiate transcription.

It catalyses the reaction RNA(n) + a ribonucleoside 5'-triphosphate = RNA(n+1) + diphosphate. Functionally, DNA-dependent RNA polymerase catalyzes the transcription of DNA into RNA using the four ribonucleoside triphosphates as substrates. The polypeptide is DNA-directed RNA polymerase subunit beta (Chlamydia muridarum (strain MoPn / Nigg)).